The chain runs to 556 residues: Oxygen-dependent choline dehydrogenase (556 aa).

Residue D4–E33 participates in FAD binding. Residue H473 is the Proton acceptor of the active site.

This sequence belongs to the GMC oxidoreductase family. It depends on FAD as a cofactor.

Its subcellular location is the cell membrane. The enzyme catalyses choline + A = betaine aldehyde + AH2. The catalysed reaction is betaine aldehyde + NAD(+) + H2O = glycine betaine + NADH + 2 H(+). It functions in the pathway amine and polyamine biosynthesis; betaine biosynthesis via choline pathway; betaine aldehyde from choline (cytochrome c reductase route): step 1/1. In terms of biological role, involved in the biosynthesis of the osmoprotectant glycine betaine. Catalyzes the oxidation of choline to betaine aldehyde and betaine aldehyde to glycine betaine at the same rate. The polypeptide is Oxygen-dependent choline dehydrogenase (Escherichia coli O6:H1 (strain CFT073 / ATCC 700928 / UPEC)).